We begin with the raw amino-acid sequence, 195 residues long: Interferon omega-1 (195 aa).

The or 23 in some molecules signal peptide spans 1–21; it reads MALLFPLLAALVMTSYSPVGS. Disulfide bonds link Cys24–Cys122 and Cys52–Cys162. N-linked (GlcNAc...) asparagine glycosylation is present at Asn101.

Belongs to the alpha/beta interferon family.

It localises to the secreted. This Homo sapiens (Human) protein is Interferon omega-1 (IFNW1).